The following is a 209-amino-acid chain: MAEVEAALPVAATETPEVAAEGDAGAAEAKGPHKLQRQWTFWYDIQTKPKPGAAWGTSLKKGYTFDTVEEFWCLYDQIFRPSKLVGSADFHLFKAGVEPKWEDPECANGGKWTVISSRKTNLDTMWLETCMALIGEQFDESQEICGVVASVRQRQDKLSLWTKTASNEAVQVDIGKKWKEVIDYNDKMVYSFHDDSRSQKPSRGGRYTV.

Residues 1–29 (MAEVEAALPVAATETPEVAAEGDAGAAEA) are disordered. Positions 9-29 (PVAATETPEVAAEGDAGAAEA) are enriched in low complexity. Residues 51–56 (PGAAWG), Lys83, and 101–102 (WE) each bind mRNA. A disulfide bridge links Cys106 with Cys145. MRNA is bound by residues 152–157 (RQRQDK) and 197–200 (RSQK).

It belongs to the eukaryotic initiation factor 4E family. In terms of assembly, EIF4F is a multi-subunit complex, the composition of which varies with external and internal environmental conditions. It is composed of at least EIF4A, EIF4E and EIF4G. EIF4E is also known to interact with other partners. In higher plants two isoforms of EIF4F have been identified, named isoform EIF4F and isoform EIF(iso)4F. Isoform EIF4F has subunits p220 and p26, whereas isoform EIF(iso)4F has subunits p82 and p28. Post-translationally, according to the redox status, the Cys-106-Cys-145 disulfide bridge may have a role in regulating protein function by affecting its ability to bind capped mRNA.

The protein resides in the cytoplasm. Its subcellular location is the nucleus. Functionally, component of the protein complex eIF4F, which is involved in the recognition of the mRNA cap, ATP-dependent unwinding of 5'-terminal secondary structure and recruitment of mRNA to the ribosome. Recognizes and binds the 7-methylguanosine-containing mRNA cap during an early step in the initiation of protein synthesis and facilitates ribosome binding by inducing the unwinding of the mRNAs secondary structures. The protein is Eukaryotic translation initiation factor isoform 4E-2 of Triticum aestivum (Wheat).